Consider the following 228-residue polypeptide: Sensory transduction protein RegX3 (228 aa).

Residues 3-116 (SVLIVEDEES…ELIARIRAVL (114 aa)) enclose the Response regulatory domain. The residue at position 52 (Asp52) is a 4-aspartylphosphate. The segment at residues 129 to 228 (DGVLEAGPVR…VRGLGYKLEG (100 aa)) is a DNA-binding region (ompR/PhoB-type).

In terms of processing, phosphorylated by SenX3.

Its function is as follows. Member of the two-component regulatory system SenX3/RegX3 involved in stress response. The system is involved in phosphate starvation response. Once phosphorylated by SenX3, activates the expression of the alkaline phosphatase phoA, the high-affinity phosphate transporter pstSCAB, phnDCE, phnF and senX3. May act as a negative regulator of NhaA. Acts by binding to a DNA motif consisting of an inverted repeat. In Mycolicibacterium smegmatis (strain ATCC 700084 / mc(2)155) (Mycobacterium smegmatis), this protein is Sensory transduction protein RegX3.